The chain runs to 490 residues: Cardiolipin synthase A (490 aa).

2 helical membrane-spanning segments follow: residues 4–24 (YLFT…IIIV) and 39–59 (AAWL…WFLL). PLD phosphodiesterase domains are found at residues 220-247 (MDLR…VDPY) and 403-430 (KKGL…DMRS). Catalysis depends on residues His225, Lys227, Asp232, His408, Lys410, and Asp415.

The protein belongs to the phospholipase D family. Cardiolipin synthase subfamily. ClsA sub-subfamily.

It localises to the cell membrane. It catalyses the reaction 2 a 1,2-diacyl-sn-glycero-3-phospho-(1'-sn-glycerol) = a cardiolipin + glycerol. In terms of biological role, catalyzes the reversible phosphatidyl group transfer from one phosphatidylglycerol molecule to another to form cardiolipin (CL) (diphosphatidylglycerol) and glycerol. The sequence is that of Cardiolipin synthase A from Buchnera aphidicola subsp. Baizongia pistaciae (strain Bp).